The primary structure comprises 232 residues: Ion-translocating oxidoreductase complex subunit E (232 aa).

Helical transmembrane passes span 18–38 (GLVQ…LTNA), 39–59 (LGLG…VSLV), 69–89 (IPVF…LINA), 93–113 (GLYL…IIIG), 127–147 (AAFD…VLGA), and 182–202 (PFLL…LIAL).

It belongs to the NqrDE/RnfAE family. As to quaternary structure, the complex is composed of six subunits: RnfA, RnfB, RnfC, RnfD, RnfE and RnfG.

Its subcellular location is the cell inner membrane. In terms of biological role, part of a membrane-bound complex that couples electron transfer with translocation of ions across the membrane. The protein is Ion-translocating oxidoreductase complex subunit E of Shewanella sp. (strain ANA-3).